Here is a 219-residue protein sequence, read N- to C-terminus: Large ribosomal subunit protein bL25 (219 aa).

Positions 176-219 are disordered; that stretch reads VTVVPPTDEPSEEEVEAMEGESATEEPEVVDEDKEDDEEENKED. Residues 184–219 show a composition bias toward acidic residues; it reads EPSEEEVEAMEGESATEEPEVVDEDKEDDEEENKED.

The protein belongs to the bacterial ribosomal protein bL25 family. CTC subfamily. In terms of assembly, part of the 50S ribosomal subunit; part of the 5S rRNA/L5/L18/L25 subcomplex. Contacts the 5S rRNA. Binds to the 5S rRNA independently of L5 and L18.

This is one of the proteins that binds to the 5S RNA in the ribosome where it forms part of the central protuberance. The sequence is that of Large ribosomal subunit protein bL25 from Staphylococcus epidermidis (strain ATCC 12228 / FDA PCI 1200).